A 228-amino-acid chain; its full sequence is Adenosylcobinamide-GDP ribazoletransferase (228 aa).

6 consecutive transmembrane segments (helical) span residues 24 to 44 (VWML…ILYL), 50 to 70 (NVLS…DGLA), 96 to 116 (IAGT…LFSA), 117 to 137 (PFYS…LALA), 159 to 176 (VFLG…ILLY), and 181 to 198 (IFAL…KISL).

It belongs to the CobS family. Mg(2+) is required as a cofactor.

The protein resides in the cell membrane. The catalysed reaction is alpha-ribazole + adenosylcob(III)inamide-GDP = adenosylcob(III)alamin + GMP + H(+). It catalyses the reaction alpha-ribazole 5'-phosphate + adenosylcob(III)inamide-GDP = adenosylcob(III)alamin 5'-phosphate + GMP + H(+). It participates in cofactor biosynthesis; adenosylcobalamin biosynthesis; adenosylcobalamin from cob(II)yrinate a,c-diamide: step 7/7. Joins adenosylcobinamide-GDP and alpha-ribazole to generate adenosylcobalamin (Ado-cobalamin). Also synthesizes adenosylcobalamin 5'-phosphate from adenosylcobinamide-GDP and alpha-ribazole 5'-phosphate. The sequence is that of Adenosylcobinamide-GDP ribazoletransferase from Pyrococcus furiosus (strain ATCC 43587 / DSM 3638 / JCM 8422 / Vc1).